Consider the following 469-residue polypeptide: MTNITLMNQLTPKQIVEKLDQYIIGQTGAKKSVAVALRNRYRRQLMDESIRDEIIPKNILMIGPTGVGKTEIARRIAKIVRAPFSKVEATKFTEVGYVGRDVESMVRDLVEVSVRLVKEEKMQLVRVKAEKNAEKRLIKLLAPSQKKKQTTSQNPLEALFGGMNQPDESPEEEVDQELKNKRSQIEWRLQNGELDDEIVTVEVKEQQNPMLDMMRGAGMDQMNGMQDALSGMFPAKKKKRKVTVREAKKILFEDEASKLIDADELAAEGIHRAEQMGMIFIDEIDKIASKEGGGNAQVSREGVQRDILPIVEGSQISTKYGTVNTEYILFIAAGAFHMSKPSDLIPELQGRFPIRIELDKLTQEDFYKILTEPDNALIKQYKALLKTEGIDLIFTKEAVERIAEIAFQVNQDSDNIGARRLHTILEKLLEDLLFEAPEINMESIKVTENYVNEKLAPIMQNKDLTQFIL.

ATP-binding positions include Ile24, Gly66–Glu71, Asp282, Glu347, and Arg419.

The protein belongs to the ClpX chaperone family. HslU subfamily. As to quaternary structure, a double ring-shaped homohexamer of HslV is capped on each side by a ring-shaped HslU homohexamer. The assembly of the HslU/HslV complex is dependent on binding of ATP.

The protein localises to the cytoplasm. Its function is as follows. ATPase subunit of a proteasome-like degradation complex; this subunit has chaperone activity. The binding of ATP and its subsequent hydrolysis by HslU are essential for unfolding of protein substrates subsequently hydrolyzed by HslV. HslU recognizes the N-terminal part of its protein substrates and unfolds these before they are guided to HslV for hydrolysis. This Listeria monocytogenes serotype 4b (strain CLIP80459) protein is ATP-dependent protease ATPase subunit HslU.